The sequence spans 154 residues: Protein-export protein SecB (154 aa).

It belongs to the SecB family. As to quaternary structure, homotetramer, a dimer of dimers. One homotetramer interacts with 1 SecA dimer.

It is found in the cytoplasm. Functionally, one of the proteins required for the normal export of preproteins out of the cell cytoplasm. It is a molecular chaperone that binds to a subset of precursor proteins, maintaining them in a translocation-competent state. It also specifically binds to its receptor SecA. In Buchnera aphidicola subsp. Schizaphis graminum (strain Sg), this protein is Protein-export protein SecB.